We begin with the raw amino-acid sequence, 99 residues long: Aspartyl/glutamyl-tRNA(Asn/Gln) amidotransferase subunit C (99 aa).

It belongs to the GatC family. In terms of assembly, heterotrimer of A, B and C subunits.

The catalysed reaction is L-glutamyl-tRNA(Gln) + L-glutamine + ATP + H2O = L-glutaminyl-tRNA(Gln) + L-glutamate + ADP + phosphate + H(+). It carries out the reaction L-aspartyl-tRNA(Asn) + L-glutamine + ATP + H2O = L-asparaginyl-tRNA(Asn) + L-glutamate + ADP + phosphate + 2 H(+). In terms of biological role, allows the formation of correctly charged Asn-tRNA(Asn) or Gln-tRNA(Gln) through the transamidation of misacylated Asp-tRNA(Asn) or Glu-tRNA(Gln) in organisms which lack either or both of asparaginyl-tRNA or glutaminyl-tRNA synthetases. The reaction takes place in the presence of glutamine and ATP through an activated phospho-Asp-tRNA(Asn) or phospho-Glu-tRNA(Gln). In Solibacter usitatus (strain Ellin6076), this protein is Aspartyl/glutamyl-tRNA(Asn/Gln) amidotransferase subunit C.